Reading from the N-terminus, the 351-residue chain is 3-hydroxy-4-methyl-anthranilyl-[aryl-carrier protein] 5-monooxygenase (351 aa).

This sequence belongs to the aromatic-ring hydroxylase family. It depends on FAD as a cofactor.

It catalyses the reaction 3-hydroxy-4-methylanthranilyl-[aryl-carrier protein] + NADH + O2 + H(+) = 3,5-dihydroxy-4-methylanthranilyl-[aryl-carrier protein] + NAD(+) + H2O. It participates in antibiotic biosynthesis. Involved in the biosynthesis of the antitumor antibiotic sibiromycin. Hydroxylates the C5 position of the peptidyl carrier protein (PCP)-bound 4-methyl-3-hydroxyanthranilic acid (4-MHA or 3H4MAA), leading to the formation of the fully substituted anthranilate moiety found in sibiromycin. The chain is 3-hydroxy-4-methyl-anthranilyl-[aryl-carrier protein] 5-monooxygenase from Streptosporangium sibiricum.